A 242-amino-acid chain; its full sequence is RNA transcription, translation and transport factor protein (242 aa).

The protein belongs to the RTRAF family. Homodimer. Component of a tRNA-splicing ligase complex.

The protein localises to the nucleus. Its subcellular location is the cytoplasm. The protein resides in the cytosol. It is found in the perinuclear region. It localises to the cytoskeleton. The protein localises to the microtubule organizing center. Its subcellular location is the centrosome. Its function is as follows. RNA-binding protein involved in modulation of mRNA transcription by Polymerase II. Component of the tRNA-splicing ligase complex. The polypeptide is RNA transcription, translation and transport factor protein (Danio rerio (Zebrafish)).